The chain runs to 664 residues: DCC-interacting protein 13-beta (664 aa).

Residues 1-428 form a required for RAB5A binding region; sequence MPAVDKLLLE…NSEMENENDK (428 aa). The BAR domain occupies 3 to 268; sequence AVDKLLLEEA…ESVYTPDSDV (266 aa). The region spanning 277–375 is the PH domain; that stretch reads LIQKAGYLNL…WICAINNISR (99 aa). Positions 488–637 constitute a PID domain; that stretch reads SLLQQMFIVR…LMLSIPLTND (150 aa). Residues 643-664 are disordered; sequence LNDQPDDDDGNPNEHRGAESEA. Positions 654 to 664 are enriched in basic and acidic residues; sequence PNEHRGAESEA.

As to quaternary structure, homodimer. Homotetramer. Binds RAB5A/Rab5 through an N-terminal domain. This interaction is essential for its recruitment to endosomal membranes as well as its role in cell proliferation. Binds subunits of the NuRD/MeCP1 complex. Interacts with FSHR; interaction is independent of follicle stimulating hormone stimulation. Interacts with APPL1; the interaction is decreased by adiponectin in a time-dependent manner. Forms a complex comprising APPL1, RUVBL2, CTNNB1, HDAC1 and HDAC2; interaction reduces interaction between CTNNB1, HDAC1, HDAC2 and RUVBL2 leading to the decrease of deacetylase activity of this complex; affects the recruitment of repressive complexes to the Wnt target genes. Interacts (via BAR domain) with TBC1D1; interaction is dependent of TBC1D1 phosphorylation at 'Ser-235'; interaction diminishes the phosphorylation of TBC1D1 at 'Thr-596', resulting in inhibition of SLC2A4 translocation and glucose uptake. Interacts with ANXA2; targets APPL2 to endosomes and acting in parallel to RAB5A. Interacts with RAB31 (in GTP-bound form); interaction contributes to or enhances recruitment of APPL2 to the phagosomes; interaction enhances Fc-gamma receptor-mediated phagocytosis through PI3K/Akt signaling in macrophages. Interacts with PIK3R1; forms a complex with PIK3R1 and APPL1. Interacts (via BAR domain) with ADIPOR1; hinders the accessibility of APPL1 to ADIPOR1; negatively regulates adiponectin signaling; ADIPOQ dissociates this interaction and facilitates the recruitment of APPL1 to ADIPOR1. Interacts (via BAR domain) with ADIPOR2; ADIPOQ dissociates this interaction. High levels in brain, heart, kidney and skeletal muscle.

It is found in the early endosome membrane. It localises to the nucleus. Its subcellular location is the cell membrane. The protein resides in the endosome membrane. The protein localises to the cytoplasm. It is found in the cytoplasmic vesicle. It localises to the phagosome. Its subcellular location is the cell projection. The protein resides in the ruffle. The protein localises to the ruffle membrane. It is found in the phagosome membrane. In terms of biological role, multifunctional adapter protein that binds to various membrane receptors, nuclear factors and signaling proteins to regulate many processes, such as cell proliferation, immune response, endosomal trafficking and cell metabolism. Regulates signaling pathway leading to cell proliferation through interaction with RAB5A and subunits of the NuRD/MeCP1 complex. Plays a role in immune response by modulating phagocytosis, inflammatory and innate immune responses. In macrophages, enhances Fc-gamma receptor-mediated phagocytosis through interaction with RAB31 leading to activation of PI3K/Akt signaling. In response to LPS, modulates inflammatory responses by playing a key role on the regulation of TLR4 signaling and in the nuclear translocation of RELA/NF-kappa-B p65 and the secretion of pro- and anti-inflammatory cytokines. Also functions as a negative regulator of innate immune response via inhibition of AKT1 signaling pathway by forming a complex with APPL1 and PIK3R1. Plays a role in endosomal trafficking of TGFBR1 from the endosomes to the nucleus. Plays a role in cell metabolism by regulating adiponecting ans insulin signaling pathways and adaptative thermogenesis. In muscle, negatively regulates adiponectin-simulated glucose uptake and fatty acid oxidation by inhibiting adiponectin signaling pathway through APPL1 sequestration thereby antagonizing APPL1 action. In muscles, negatively regulates insulin-induced plasma membrane recruitment of GLUT4 and glucose uptake through interaction with TBC1D1. Plays a role in cold and diet-induced adaptive thermogenesis by activating ventromedial hypothalamus (VMH) neurons throught AMPK inhibition which enhances sympathetic outflow to subcutaneous white adipose tissue (sWAT), sWAT beiging and cold tolerance. Also plays a role in other signaling pathways namely Wnt/beta-catenin, HGF and glucocorticoid receptor signaling. Positive regulator of beta-catenin/TCF-dependent transcription through direct interaction with RUVBL2/reptin resulting in the relief of RUVBL2-mediated repression of beta-catenin/TCF target genes by modulating the interactions within the beta-catenin-reptin-HDAC complex. May affect adult neurogenesis in hippocampus and olfactory system via regulating the sensitivity of glucocorticoid receptor. Required for fibroblast migration through HGF cell signaling. The protein is DCC-interacting protein 13-beta of Homo sapiens (Human).